The following is a 210-amino-acid chain: Probable peroxygenase 7 (210 aa).

The interval Met1 to Lys24 is disordered. Positions Glu25–Gly60 constitute an EF-hand domain. His33 is a heme binding site. Asp38, Asn40, Asp42, Thr44, and Glu49 together coordinate Ca(2+). A Proline-knot motif is present at residues Pro81–Pro90. Residue Ser188 is modified to Phosphoserine.

Belongs to the caleosin family. Homodimer. The cofactor is heme b. It depends on Ca(2+) as a cofactor. In terms of tissue distribution, expressed in pollen coat.

The protein localises to the secreted. The catalysed reaction is RH + ROOH = ROH + ROH.. Functionally, probable calcium-binding peroxygenase. May be involved in pollination. The polypeptide is Probable peroxygenase 7 (PXG7) (Arabidopsis thaliana (Mouse-ear cress)).